Consider the following 347-residue polypeptide: GTPase Obg (347 aa).

Residues 1–159 (MHFIDQAEIE…VRLRLELKLI (159 aa)) enclose the Obg domain. The OBG-type G domain occupies 160-328 (AEVGIVGLPN…LLQRVWQCLG (169 aa)). GTP contacts are provided by residues 166 to 173 (GLPNAGKS), 191 to 195 (FTTLQ), 213 to 216 (DIPG), 280 to 283 (NKID), and 309 to 311 (SAI). 2 residues coordinate Mg(2+): Ser-173 and Thr-193.

This sequence belongs to the TRAFAC class OBG-HflX-like GTPase superfamily. OBG GTPase family. Monomer. Mg(2+) is required as a cofactor.

Its subcellular location is the cytoplasm. Functionally, an essential GTPase which binds GTP, GDP and possibly (p)ppGpp with moderate affinity, with high nucleotide exchange rates and a fairly low GTP hydrolysis rate. Plays a role in control of the cell cycle, stress response, ribosome biogenesis and in those bacteria that undergo differentiation, in morphogenesis control. The chain is GTPase Obg from Synechococcus sp. (strain JA-2-3B'a(2-13)) (Cyanobacteria bacterium Yellowstone B-Prime).